Reading from the N-terminus, the 161-residue chain is Small heat shock protein hspJ (161 aa).

Residues 52 to 161 enclose the sHSP domain; that stretch reads SKFTSLNPKL…FEKEIKINIE (110 aa).

Belongs to the small heat shock protein (HSP20) family.

This is Small heat shock protein hspJ (hspJ) from Dictyostelium discoideum (Social amoeba).